The chain runs to 69 residues: Pancreatic propolypeptide YG (69 aa).

It belongs to the NPY family.

It is found in the secreted. This chain is Pancreatic propolypeptide YG, found in Lophius americanus (American angler).